A 1423-amino-acid polypeptide reads, in one-letter code: uncharacterized protein (1423 aa).

An N-terminal signal peptide occupies residues 1 to 28 (MTSSVRLAFLATLLLLLPLEAQIQQANS). Topologically, residues 29 to 1321 (ANVNQNVGQQ…RSREKQNFLT (1293 aa)) are extracellular. 6 N-linked (GlcNAc...) asparagine glycosylation sites follow: Asn-94, Asn-306, Asn-355, Asn-483, Asn-666, and Asn-903. The NIDO domain occupies 184–347 (SFFGQSASKA…GRYMFRVDDV (164 aa)). The AMOP domain occupies 638 to 818 (VKKKSLEMCH…FRCQMFYWRR (181 aa)). A helical transmembrane segment spans residues 1322–1342 (WLAIIGGIFGVLVFVILIFLC). The Cytoplasmic segment spans residues 1343 to 1423 (CWIVKQKKKG…EDLHGLKTSV (81 aa)). Positions 1364-1401 (SRSSMTGSRGGKKYPIHESEPLNEKRFDADTYRDDDFY) are disordered. Residues 1378–1401 (PIHESEPLNEKRFDADTYRDDDFY) are compositionally biased toward basic and acidic residues.

The protein resides in the membrane. This is an uncharacterized protein from Caenorhabditis elegans.